Reading from the N-terminus, the 503-residue chain is Cytochrome P450 3A15 (503 aa).

Cysteine 442 provides a ligand contact to heme.

Belongs to the cytochrome P450 family. It depends on heme as a cofactor.

It is found in the endoplasmic reticulum membrane. The protein localises to the microsome membrane. The enzyme catalyses an organic molecule + reduced [NADPH--hemoprotein reductase] + O2 = an alcohol + oxidized [NADPH--hemoprotein reductase] + H2O + H(+). In terms of biological role, cytochromes P450 are a group of heme-thiolate monooxygenases. In liver microsomes, this enzyme is involved in an NADPH-dependent electron transport pathway. It oxidizes a variety of structurally unrelated compounds, including steroids, fatty acids, and xenobiotics. The polypeptide is Cytochrome P450 3A15 (CYP3A15) (Cavia porcellus (Guinea pig)).